Consider the following 83-residue polypeptide: UPF0297 protein DSY2420 (83 aa).

This sequence belongs to the UPF0297 family.

The chain is UPF0297 protein DSY2420 from Desulfitobacterium hafniense (strain Y51).